The primary structure comprises 496 residues: Alanine aminotransferase 1 (496 aa).

A2 is modified (N-acetylalanine). T22 is subject to Phosphothreonine. K314 is modified (N6-(pyridoxal phosphate)lysine).

This sequence belongs to the class-I pyridoxal-phosphate-dependent aminotransferase family. Alanine aminotransferase subfamily. Homodimer. It depends on pyridoxal 5'-phosphate as a cofactor. Liver, kidney, heart, and skeletal muscles. Expressed at moderate levels in the adipose tissue.

Its subcellular location is the cytoplasm. The enzyme catalyses L-alanine + 2-oxoglutarate = pyruvate + L-glutamate. Its pathway is amino-acid degradation; L-alanine degradation via transaminase pathway; pyruvate from L-alanine: step 1/1. In terms of biological role, catalyzes the reversible transamination between alanine and 2-oxoglutarate to form pyruvate and glutamate. Participates in cellular nitrogen metabolism and also in liver gluconeogenesis starting with precursors transported from skeletal muscles. The polypeptide is Alanine aminotransferase 1 (GPT) (Homo sapiens (Human)).